The chain runs to 261 residues: (3R)-3-hydroxyacyl-CoA dehydrogenase (261 aa).

NAD(+) contacts are provided by residues 15-23 (LVTGAGSGI) and 42-43 (DL). Ser-60 carries the post-translational modification Phosphoserine. 74-76 (ADV) serves as a coordination point for NAD(+). Ser-156 lines the substrate pocket. An N6-succinyllysine modification is found at Lys-160. Tyr-169 serves as the catalytic Proton acceptor. NAD(+) is bound by residues 169–173 (YAASK) and 202–204 (IAT). An N6-succinyllysine modification is found at Lys-173.

Belongs to the short-chain dehydrogenases/reductases (SDR) family. In terms of assembly, heterotetramer with CBR4; contains two molecules of HSD17B8 and CBR4. As to expression, widely expressed, particularly abundant in prostate, placenta and kidney. Expressed at protein level in various tissues like brain, cerebellum, heart, lung, kidney, ovary, testis, adrenals and prostate.

It localises to the mitochondrion matrix. The catalysed reaction is a (3R)-3-hydroxyacyl-CoA + NAD(+) = a 3-oxoacyl-CoA + NADH + H(+). The enzyme catalyses 17beta-estradiol + NAD(+) = estrone + NADH + H(+). It catalyses the reaction testosterone + NAD(+) = androst-4-ene-3,17-dione + NADH + H(+). It carries out the reaction 17beta-hydroxy-5alpha-androstan-3-one + NAD(+) = 5alpha-androstan-3,17-dione + NADH + H(+). It functions in the pathway steroid biosynthesis; estrogen biosynthesis. The protein operates within lipid metabolism; fatty acid biosynthesis. It participates in lipid metabolism; mitochondrial fatty acid beta-oxidation. In terms of biological role, required for the solubility and assembly of the heterotetramer 3-ketoacyl-[acyl carrier protein] (ACP) reductase functional complex (KAR or KAR1) that forms part of the mitochondrial fatty acid synthase (mtFAS). Alpha-subunit of the KAR complex that acts as a scaffold protein required for the stability of carbonyl reductase type-4 (CBR4, beta-subunit of the KAR complex) and for its 3-ketoacyl-ACP reductase activity, thereby participating in mitochondrial fatty acid biosynthesis. Catalyzes the NAD-dependent conversion of (3R)-3-hydroxyacyl-CoA into 3-ketoacyl-CoA (3-oxoacyl-CoA) with no chain length preference; this enzymatic activity is not needed for the KAR function. Prefers (3R)-3-hydroxyacyl-CoA over (3S)-3-hydroxyacyl-CoA and displays enzymatic activity only in the presence of NAD(+). Cooperates with enoyl-CoA hydratase 1 in mitochondria, together they constitute an alternative route to the auxiliary enzyme pathways for the breakdown of Z-PUFA (cis polyunsaturated fatty acid) enoyl-esters. NAD-dependent 17-beta-hydroxysteroid dehydrogenase with highest activity towards estradiol (17beta-estradiol or E2). Has very low activity towards testosterone and dihydrotestosterone (17beta-hydroxy-5alpha-androstan-3-one). Primarily an oxidative enzyme, it can switch to a reductive mode determined in the appropriate physiologic milieu and catalyze the reduction of estrone (E1) to form biologically active 17beta-estradiol. The sequence is that of (3R)-3-hydroxyacyl-CoA dehydrogenase (HSD17B8) from Homo sapiens (Human).